We begin with the raw amino-acid sequence, 728 residues long: Methionine--tRNA ligase (728 aa).

Residues 13–23 carry the 'HIGH' region motif; it reads PYANGSIHLGH. Zn(2+) contacts are provided by C144, C147, C157, and C160. Positions 348–352 match the 'KMSKS' region motif; the sequence is KMSKS. K351 contributes to the ATP binding site. Residues 585-620 form a disordered region; the sequence is LAPAKSQQVAQAVETMEKNSSTTPAPAKEGEAGQAS. Positions 628 to 728 constitute a tRNA-binding domain; that stretch reads DFGKIDLRVA…EGARPGMKVK (101 aa).

Belongs to the class-I aminoacyl-tRNA synthetase family. MetG type 1 subfamily. As to quaternary structure, homodimer. Zn(2+) is required as a cofactor.

The protein localises to the cytoplasm. The enzyme catalyses tRNA(Met) + L-methionine + ATP = L-methionyl-tRNA(Met) + AMP + diphosphate. Functionally, is required not only for elongation of protein synthesis but also for the initiation of all mRNA translation through initiator tRNA(fMet) aminoacylation. This Nitrosospira multiformis (strain ATCC 25196 / NCIMB 11849 / C 71) protein is Methionine--tRNA ligase.